We begin with the raw amino-acid sequence, 587 residues long: Deoxynucleoside triphosphate triphosphohydrolase sahd-1 (587 aa).

The region spanning 92–262 is the HD domain; the sequence is RFVHSLGTFS…GHDVDKMDYL (171 aa). Zn(2+) is bound by residues His95, His134, Asp135, and Asp257. A disordered region spans residues 554–587; that stretch reads EKFLTPRKRSPQDSPDEVSSSCSTAKRRLEFGSS. Position 558 is a phosphothreonine (Thr558).

It belongs to the SAMHD1 family. As to quaternary structure, homodimer. Homotetramer; in dGTP-bound form. Requires Zn(2+) as cofactor.

The protein resides in the nucleus. The protein localises to the chromosome. It catalyses the reaction a 2'-deoxyribonucleoside 5'-triphosphate + H2O = a 2'-deoxyribonucleoside + triphosphate + H(+). Its activity is regulated as follows. Allosterically activated and regulated by GTP or dGTP. Allosteric activation promotes the formation of highly active homotetramers. Phosphorylation impairs homotetramerization, thereby inhibiting dNTPase activity. Its function is as follows. Has deoxynucleoside triphosphate (dNTPase) activity. dNTPase activity acts as a regulator of DNA precursor pools by regulating dNTP pools. Phosphorylation acts as a switch to control dNTPase-dependent and -independent functions. The sequence is that of Deoxynucleoside triphosphate triphosphohydrolase sahd-1 from Caenorhabditis elegans.